A 1982-amino-acid polypeptide reads, in one-letter code: Ras guanine nucleotide exchange factor V (1982 aa).

15 LRR repeats span residues Met1–Gly26, Leu47–Leu68, Ser69–Pro94, Asn105–Leu128, Asn130–Gly151, Ala164–Gln187, Leu188–Asn210, Val212–Leu234, Lys236–Gly257, Leu261–Ile284, Ser286–Leu307, Leu308–Leu330, Ile331–Lys352, Ser354–Leu376, and Gln378–Ser399. Topologically, residues Met1–Asn1831 are extracellular. 3 disordered regions span residues Tyr414–Gly436, Asn457–Gln532, and Asn615–Ser654. 2 stretches are compositionally biased toward low complexity: residues Gly415 to Gly436 and Asn457 to Gly495. An LRR 16 repeat occupies Asp443 to Asn466. The segment covering Leu506–Leu520 has biased composition (polar residues). The stretch at Gly515–Gly567 forms a coiled coil. The LRR 17 repeat unit spans residues Glu592 to Asn615. Residues Asn616–Thr642 show a composition bias toward gly residues. 2 LRR repeats span residues Leu657–Gly684 and His773–Ser796. Disordered regions lie at residues Gln756–Gln778 and Leu807–Pro829. A GBD/FH3 domain is found at Thr832–Gly1236. LRR repeat units follow at residues Leu979 to Leu1003, Ser1075 to Ile1100, Val1239 to Asp1263, and Val1689 to Leu1712. One can recognise an N-terminal Ras-GEF domain in the interval Lys1595–Tyr1717. The region spanning Asp1747–Arg1974 is the Ras-GEF domain. Residues Tyr1832 to Leu1848 form a helical membrane-spanning segment. Residues Arg1849–Gln1982 are Cytoplasmic-facing. 2 LRR repeats span residues Leu1865–Ala1888 and Arg1917–Tyr1941.

It is found in the membrane. Its function is as follows. Promotes the exchange of Ras-bound GDP by GTP. This is Ras guanine nucleotide exchange factor V (gefV) from Dictyostelium discoideum (Social amoeba).